Reading from the N-terminus, the 124-residue chain is Small ribosomal subunit protein uS12 (124 aa).

D89 is subject to 3-methylthioaspartic acid.

It belongs to the universal ribosomal protein uS12 family. Part of the 30S ribosomal subunit. Contacts proteins S8 and S17. May interact with IF1 in the 30S initiation complex.

Functionally, with S4 and S5 plays an important role in translational accuracy. Interacts with and stabilizes bases of the 16S rRNA that are involved in tRNA selection in the A site and with the mRNA backbone. Located at the interface of the 30S and 50S subunits, it traverses the body of the 30S subunit contacting proteins on the other side and probably holding the rRNA structure together. The combined cluster of proteins S8, S12 and S17 appears to hold together the shoulder and platform of the 30S subunit. In Moorella thermoacetica (strain ATCC 39073 / JCM 9320), this protein is Small ribosomal subunit protein uS12.